A 203-amino-acid polypeptide reads, in one-letter code: Probable cytochrome c oxidase subunit 3 (203 aa).

A run of 5 helical transmembrane segments spans residues 30–50 (IIWL…YFVA), 69–89 (LAVP…MGVF), 102–122 (WYFI…YEYY), 142–162 (ITTG…VFLL), and 179–199 (IVVS…FATI).

It belongs to the cytochrome c oxidase subunit 3 family.

The protein localises to the cell membrane. It carries out the reaction 4 Fe(II)-[cytochrome c] + O2 + 8 H(+)(in) = 4 Fe(III)-[cytochrome c] + 2 H2O + 4 H(+)(out). The polypeptide is Probable cytochrome c oxidase subunit 3 (ctaE) (Nocardia farcinica (strain IFM 10152)).